A 135-amino-acid chain; its full sequence is Protein PsiE homolog (135 aa).

Helical transmembrane passes span 20-40 (VGLIMLAAILVVFLVKETIHL), 54-74 (YMLIEGIVIYFLYFEFIALIV), 82-102 (HFPLRYFIYIGITAIIRLIIV), and 107-127 (PIDTLIYSGSILVLVVTLYLA).

Belongs to the PsiE family.

It localises to the cell inner membrane. This chain is Protein PsiE homolog, found in Yersinia pestis (strain Pestoides F).